Consider the following 289-residue polypeptide: Diaminopimelate epimerase (289 aa).

Positions 11 and 78 each coordinate substrate. C87 functions as the Proton donor in the catalytic mechanism. Substrate is bound by residues 88–89 (GN), N163, N199, and 217–218 (ER). Residue C226 is the Proton acceptor of the active site. 227 to 228 (GT) lines the substrate pocket.

The protein belongs to the diaminopimelate epimerase family. In terms of assembly, homodimer.

It localises to the cytoplasm. The catalysed reaction is (2S,6S)-2,6-diaminopimelate = meso-2,6-diaminopimelate. The protein operates within amino-acid biosynthesis; L-lysine biosynthesis via DAP pathway; DL-2,6-diaminopimelate from LL-2,6-diaminopimelate: step 1/1. Its function is as follows. Catalyzes the stereoinversion of LL-2,6-diaminopimelate (L,L-DAP) to meso-diaminopimelate (meso-DAP), a precursor of L-lysine and an essential component of the bacterial peptidoglycan. This is Diaminopimelate epimerase from Rhodococcus opacus (strain B4).